The chain runs to 793 residues: MLASDPRKVGVEEEFHLIDLKTRRLTTRAPELLARLPDDVYVDELQQCVVEVNSGVYADLDGLRSDLERHRRLLVDAAEDLGIGVAAAGSVPLALPAEMHVTGTQRYGRMLADYQVLAREQLICGTQVHVDLPDRDEAVQVAHRVAPHMPVLLALSASSPFRSDGADTGYASARTLLWLRWPSTGPAAPVSSAAEYGALIDDLVASGVISDPGMAYFDVRPSVKLPTLELRVCDSCPRLDTVLLVAALFRALVEREVEGLRAGRKGVEVLPTLTRAALWRAARSGLEEELVDVTVPQARPASELVGDFVNSLRPQLEETGDWDRVVELSAEATAHGSSAARQRQALGRRGRLTDVVDLLLAETAGRTEHLPDVEVPPPREPGPKSTGAGRTRRYWSARFWDRGDTADMTWTESTELDEKKLVEWRRDLHAHPELSFEERRTTGVVRDHLVGLGLEPVLMPGGTGLWCDVGPETGECIALRADLDALPVAETTGLPFESRVPGVSHACGHDAHTTMLMGAASVLTKYPPPTRVRLVFQPAEETTPGGAVDTIAAGALDGVSKIFALHCDPHLEVGKLSTRTGPITSSNDSVTVRLWSAGGHTARPHLTGDLIHATAVLVTGLASVLDRRIDARTATVLTWGKVAAGQVANSVPESGELVGTLRSASRETWASLEPLVTDAICHLLAPYNVRYELSYLRGVPPVVNDPDCTADLREAIESVVGFDHLAEAHQSSGGEDFAWYLEKVPGAMARLGVWDGTGTRQELHQPGFNLDERAMIHGVRTLVALTRLEDQSG.

Residues 1 to 407 (MLASDPRKVG…RFWDRGDTAD (407 aa)) are carboxylate-amine ligase. The segment at 367–390 (TEHLPDVEVPPPREPGPKSTGAGR) is disordered. A peptidase M20 region spans residues 408 to 793 (MTWTESTELD…ALTRLEDQSG (386 aa)).

It in the C-terminal section; belongs to the glutamate--cysteine ligase type 2 family. YbdK subfamily.

It catalyses the reaction L-cysteine + L-glutamate + ATP = gamma-L-glutamyl-L-cysteine + ADP + phosphate + H(+). Its function is as follows. ATP-dependent carboxylate-amine ligase which exhibits weak glutamate--cysteine ligase activity. The chain is Putative glutamate--cysteine ligase 2-3 from Rhodococcus jostii (strain RHA1).